A 311-amino-acid chain; its full sequence is NAD kinase (311 aa).

Catalysis depends on aspartate 89, which acts as the Proton acceptor. NAD(+) contacts are provided by residues 89 to 90 (DG), arginine 94, 163 to 164 (NE), aspartate 193, and 204 to 209 (TAYAFS).

Belongs to the NAD kinase family. A divalent metal cation is required as a cofactor.

Its subcellular location is the cytoplasm. It catalyses the reaction NAD(+) + ATP = ADP + NADP(+) + H(+). Its function is as follows. Involved in the regulation of the intracellular balance of NAD and NADP, and is a key enzyme in the biosynthesis of NADP. Catalyzes specifically the phosphorylation on 2'-hydroxyl of the adenosine moiety of NAD to yield NADP. This is NAD kinase from Mycobacterium leprae (strain Br4923).